The sequence spans 339 residues: Quinolinate synthase (339 aa).

Iminosuccinate contacts are provided by His63 and Ser81. [4Fe-4S] cluster is bound at residue Cys126. Iminosuccinate is bound by residues 152-154 and Ser169; that span reads YVN. Residue Cys211 coordinates [4Fe-4S] cluster. Iminosuccinate contacts are provided by residues 237 to 239 and Thr254; that span reads HPE. Cys297 provides a ligand contact to [4Fe-4S] cluster.

Belongs to the quinolinate synthase family. Type 2 subfamily. It depends on [4Fe-4S] cluster as a cofactor.

It is found in the cytoplasm. The catalysed reaction is iminosuccinate + dihydroxyacetone phosphate = quinolinate + phosphate + 2 H2O + H(+). The protein operates within cofactor biosynthesis; NAD(+) biosynthesis; quinolinate from iminoaspartate: step 1/1. In terms of biological role, catalyzes the condensation of iminoaspartate with dihydroxyacetone phosphate to form quinolinate. The sequence is that of Quinolinate synthase from Xylella fastidiosa (strain 9a5c).